A 1207-amino-acid polypeptide reads, in one-letter code: Plasma membrane calcium-transporting ATPase 4 (1207 aa).

Topologically, residues 1 to 100 (MTNPTEHTLP…KTFLELVWEA (100 aa)) are cytoplasmic. Residue Ser-13 is modified to Phosphoserine. A helical membrane pass occupies residues 101-121 (LQDVTLIILEIAAIISLVLSF). At 122 to 147 (YRPPGGENEQCGLAVTSPEDEGEAEA) the chain is on the extracellular side. Residues 148 to 168 (GWIEGAAILFSVIIVVLVTAF) traverse the membrane as a helical segment. Over 169-368 (NDWSKEKQFR…LAVQIGKAGL (200 aa)) the chain is Cytoplasmic. Residues 294–317 (EEEKKKKGKKQGVPENRNKAKTQD) are disordered. 2 positions are modified to phosphoserine: Ser-328 and Ser-334. A helical membrane pass occupies residues 369–389 (IMSAITVLILILYFVIDNFVI). The Extracellular portion of the chain corresponds to 390 to 408 (QRRPWLAECTPIYVQYFVK). A helical transmembrane segment spans residues 409 to 429 (FFIIGVTVLVVAVPEGLPLAV). The Cytoplasmic segment spans residues 430 to 843 (TISLAYSVKK…RNVYDSISKF (414 aa)). Residue Asp-465 is the 4-aspartylphosphate intermediate of the active site. Residues Asp-785 and Asp-789 each coordinate Mg(2+). A helical transmembrane segment spans residues 844–864 (LQFQLTVNVVAVIVAFTGACI). Over 865–871 (TQDSPLK) the chain is Extracellular. Residues 872–892 (AVQMLWVNLIMDTFASLALAT) traverse the membrane as a helical segment. Over 893–918 (EPPTDSLLKRRPYGRNKPLISRTMMK) the chain is Cytoplasmic. A helical membrane pass occupies residues 919 to 939 (NILGHAVYQLTVIFFLVFAGE). Residues 940-957 (KFFDIDSGRRAPLHSPPS) lie on the Extracellular side of the membrane. Residues 958-977 (QHYTIIFNTFVLMQLFNEIN) traverse the membrane as a helical segment. Topologically, residues 978 to 994 (SRKIHGERNVFSGIFRN) are cytoplasmic. The helical transmembrane segment at 995 to 1015 (LIFCSVVLGTFISQIIIVEFG) threads the bilayer. The Extracellular segment spans residues 1016 to 1028 (GKPFSCTKLTLSQ). A helical transmembrane segment spans residues 1029 to 1049 (WFWCLFIGIGELLWGQVISTI). Residues 1050 to 1207 (PTQSLKFLKE…SPLHSLETSV (158 aa)) lie on the Cytoplasmic side of the membrane. The calmodulin-binding subdomain A stretch occupies residues 1086 to 1103 (LRRGQILWFRGLNRIQTQ). Phosphothreonine; by PKC is present on Thr-1102. Positions 1104–1113 (IKVVKAFHSS) are calmodulin-binding subdomain B. The interval 1159 to 1181 (VSKPGTKTSSLDGEVTPQTNKNN) is disordered. Residues 1163–1181 (GTKTSSLDGEVTPQTNKNN) show a composition bias toward polar residues.

This sequence belongs to the cation transport ATPase (P-type) (TC 3.A.3) family. Type IIB subfamily. Interacts with PDZD11. Interacts with SLC35G1 and STIM1. Interacts with calmodulin. As to expression, isoform 1 is detected in brain, heart, liver, testis and epididymis. Isoform 2 is detected in brain (at protein level), heart, seminal vesicle and epididymis. There is a shift in expression from isoform 1 to isoform 2 along the length of the epididymis from caput to cauda (at protein level).

It is found in the cell membrane. Its subcellular location is the cell projection. The protein resides in the cilium. It localises to the flagellum membrane. The enzyme catalyses Ca(2+)(in) + ATP + H2O = Ca(2+)(out) + ADP + phosphate + H(+). Its activity is regulated as follows. Activated by calcium/calmodulin. In terms of biological role, calcium/calmodulin-regulated and magnesium-dependent enzyme that catalyzes the hydrolysis of ATP coupled with the transport of calcium out of the cell. By regulating sperm cells calcium homeostasis, may play a role in sperm motility. The chain is Plasma membrane calcium-transporting ATPase 4 from Bos taurus (Bovine).